A 298-amino-acid polypeptide reads, in one-letter code: ATP phosphoribosyltransferase (298 aa).

The protein belongs to the ATP phosphoribosyltransferase family. Long subfamily. Requires Mg(2+) as cofactor.

The protein resides in the cytoplasm. The catalysed reaction is 1-(5-phospho-beta-D-ribosyl)-ATP + diphosphate = 5-phospho-alpha-D-ribose 1-diphosphate + ATP. It functions in the pathway amino-acid biosynthesis; L-histidine biosynthesis; L-histidine from 5-phospho-alpha-D-ribose 1-diphosphate: step 1/9. Its activity is regulated as follows. Feedback inhibited by histidine. Functionally, catalyzes the condensation of ATP and 5-phosphoribose 1-diphosphate to form N'-(5'-phosphoribosyl)-ATP (PR-ATP). Has a crucial role in the pathway because the rate of histidine biosynthesis seems to be controlled primarily by regulation of HisG enzymatic activity. The protein is ATP phosphoribosyltransferase of Vibrio vulnificus (strain CMCP6).